The following is a 357-amino-acid chain: MSNIEQLARANVRALTPYQSARRLGGNGDVWLNANEYPEAPAFQLTLQTLNRYPECQPVQVINRYAEYAGVQPEQVLVSRGADEGIELLIRAFCEPGKDAILFCPPTYGMYAVSAETFGVERRTAASKADWQLDLESIEAQLDGTKVIYVCSPNNPTGNLIAREDLRQLLTMAQGNALVVIDEAYIEFCPQATTAVWLDEFPHLVILRTLSKAFSLAGLRCGFTLANPEVIQLLLKVIAPYPLSTPVADIAAQALSREGIAKMKANVEEITSARRWLSDALKDIPCIEEVFPSESNYLLVRFTASPSVFKTLWDQGIILRDQNKQPSLAGCLRITIGNRYECERVVAALQSLPGINA.

Lys212 bears the N6-(pyridoxal phosphate)lysine mark.

It belongs to the class-II pyridoxal-phosphate-dependent aminotransferase family. Histidinol-phosphate aminotransferase subfamily. Homodimer. Pyridoxal 5'-phosphate serves as cofactor.

It carries out the reaction L-histidinol phosphate + 2-oxoglutarate = 3-(imidazol-4-yl)-2-oxopropyl phosphate + L-glutamate. It participates in amino-acid biosynthesis; L-histidine biosynthesis; L-histidine from 5-phospho-alpha-D-ribose 1-diphosphate: step 7/9. This Pectobacterium carotovorum subsp. carotovorum (strain PC1) protein is Histidinol-phosphate aminotransferase.